The chain runs to 224 residues: UPF0758 protein VP0184 (224 aa).

The 123-residue stretch at 102–224 (ALTSPEQTKL…SVSFAERGWI (123 aa)) folds into the MPN domain. 3 residues coordinate Zn(2+): His-173, His-175, and Asp-186. The JAMM motif signature appears at 173–186 (HNHPSGVAEPSQAD).

This sequence belongs to the UPF0758 family.

The polypeptide is UPF0758 protein VP0184 (Vibrio parahaemolyticus serotype O3:K6 (strain RIMD 2210633)).